The following is a 147-amino-acid chain: uncharacterized protein (147 aa).

Positions 1 to 137 constitute an HTH marR-type domain; sequence MRDNTIGSLI…LYELMTKVHK (137 aa). The segment at residues 53-76 is a DNA-binding region (H-T-H motif); sequence QMELAEKVTVTQGGISRMLTRLEK.

This is an uncharacterized protein from Bacillus cereus (strain ATCC 10987 / NRS 248).